A 386-amino-acid chain; its full sequence is tRNA-specific 2-thiouridylase MnmA (386 aa).

Residues glycine 9–serine 16 and methionine 35 each bind ATP. The interaction with target base in tRNA stretch occupies residues asparagine 95–aspartate 97. The active-site Nucleophile is cysteine 100. An intrachain disulfide couples cysteine 100 to cysteine 196. Position 124 (glycine 124) interacts with ATP. The segment at lysine 146–glutamine 148 is interaction with tRNA. Cysteine 196 functions as the Cysteine persulfide intermediate in the catalytic mechanism. Residues arginine 308–tyrosine 309 are interaction with tRNA.

Belongs to the MnmA/TRMU family.

Its subcellular location is the cytoplasm. It catalyses the reaction S-sulfanyl-L-cysteinyl-[protein] + uridine(34) in tRNA + AH2 + ATP = 2-thiouridine(34) in tRNA + L-cysteinyl-[protein] + A + AMP + diphosphate + H(+). In terms of biological role, catalyzes the 2-thiolation of uridine at the wobble position (U34) of tRNA, leading to the formation of s(2)U34. The sequence is that of tRNA-specific 2-thiouridylase MnmA from Burkholderia thailandensis (strain ATCC 700388 / DSM 13276 / CCUG 48851 / CIP 106301 / E264).